Reading from the N-terminus, the 3855-residue chain is Replicase polyprotein 1ab (3855 aa).

Residues 8–28 (CMCTPAARVFWNAGQVFCTRC) form a C4-type; atypical zinc finger. Positions 69–180 (ECTPSGCCWL…QPFCPFEEAH (112 aa)) constitute a Peptidase C31 domain. A PCP1-alpha region spans residues 69–182 (ECTPSGCCWL…FCPFEEAHSS (114 aa)). Catalysis depends on for nsp1-alpha papain-like cysteine proteinase activity residues Cys-76 and His-146. An important for host EIF2AK2 inhibition region spans residues 203–204 (MM). The segment at 269–384 (PDVFDGKCWL…IFRFGAHKWY (116 aa)) is PCP1-beta. The region spanning 269-385 (PDVFDGKCWL…FRFGAHKWYG (117 aa)) is the Peptidase C32 domain. Active-site for nsp1-beta papain-like cysteine proteinase activity residues include Cys-276 and His-345. The tract at residues 418–505 (ITTYSPPTDG…GVHWEVEVRS (88 aa)) is OTU-like. In terms of domain architecture, Peptidase C33 spans 420–527 (TYSPPTDGSC…VGVCSEGCVA (108 aa)). Catalysis depends on for nsp2 cysteine proteinase activity residues Cys-429 and His-498. Disordered regions lie at residues 752 to 797 (PSDP…DAGA) and 1047 to 1088 (PPPK…SRVS). Positions 775–790 (APASTTTLVREQTPDN) are enriched in polar residues. Helical transmembrane passes span 1134–1154 (GSMAPGDWLFAGVVLLALLLC), 1179–1199 (GVFGSWMAFAVFLFSTPSNPV), and 1252–1272 (WHVLLRLCMLADLALSLVYVV). The segment at 1149-1272 (LALLLCRSYP…DLALSLVYVV (124 aa)) is HD1. The tract at residues 1327 to 1351 (TGWRGCWRGESPIHQPHQKPIAYAN) is WCCH. Transmembrane regions (helical) follow at residues 1468 to 1488 (LAVAQVSAWTLVHFILGLWFT), 1521 to 1541 (LCVSADGVTLPLFSAVAQLSG), 1543 to 1563 (EVGIFILVLVSLTALAHRMAL), 1573 to 1593 (AFCAYAWPMSSWLICFFPILL), and 1609 to 1629 (FLVFCLPAAGILSLGITGLLW). The tract at residues 1468-1629 (LAVAQVSAWT…LSLGITGLLW (162 aa)) is HD2. Residues 1694 to 1896 (GAFRTHKPCL…SLLASVPVVE (203 aa)) form the Peptidase S32 domain. Catalysis depends on charge relay system; for serine protease nsp4 activity residues His-1732, Asp-1757, and Ser-1810. 4 helical membrane-spanning segments follow: residues 1919-1939 (WTPIVAVGFFLLNEILPAVLV), 1943-1963 (FSFALFVLAWATPWSAQVLMI), 1977-1997 (LAFYALGGVVGLAAEIGTFAG), and 2020-2040 (SCVPTIIIGGLHTLGVILWLF). The HD3 stretch occupies residues 1919-2040 (WTPIVAVGFF…HTLGVILWLF (122 aa)). The 164-residue stretch at 2381–2544 (IISQLQGLTT…LPYKLYPVRG (164 aa)) folds into the NiRAN domain. Residues 2783–2917 (GRCLEADLAS…YAERPTFPNY (135 aa)) form the RdRp catalytic domain. The 64-residue stretch at 3038-3101 (GKKFRHCGIC…SPVGAGRSPL (64 aa)) folds into the AV ZBD domain. Zn(2+) contacts are provided by Cys-3044, Cys-3047, Cys-3057, Cys-3062, His-3065, His-3067, His-3069, His-3071, Cys-3078, His-3080, Cys-3087, and Cys-3090. The 160-residue stretch at 3151–3310 (DLSDGDYQVV…VFDQMPQKQL (160 aa)) folds into the (+)RNA virus helicase ATP-binding domain. 3186–3193 (GPPGSGKT) serves as a coordination point for ATP. In terms of domain architecture, (+)RNA virus helicase C-terminal spans 3311–3440 (TTIYRFGPNI…FSRGDELVVL (130 aa)). The AV-Nsp11N/CoV-Nsp15M domain maps to 3479-3576 (EGSCMPLPQV…LTLYIRGEPQ (98 aa)). The NendoU domain occupies 3578–3700 (LPETLVSTGR…MVWKGATAYF (123 aa)). Active-site residues include His-3609, His-3624, and Lys-3653.

This sequence belongs to the arteriviridae polyprotein family. Nsp1-alpha papain-like: Interacts with host RNF31. In terms of assembly, interacts with host EIF2AK2; this interaction occurs in host stress granules and leads to EIF2AK2 inhibition. Interacts with host G3BP1; this interaction probably plays a role in Nsp1-beta-mediated inhibition of host EIF2AK2. As to quaternary structure, interacts with host DDX18; this interaction redistributes host DDX18 to the cytoplasm. Interacts with host IFITM1. In terms of assembly, interacts with host DDX5. As to quaternary structure, interacts with host OTULIN. Interacts with host LGALS3. Specific enzymatic cleavages in vivo by its own proteases yield mature proteins. Nsp1 is autocleaved into two subunits, Nsp1-alpha and Nsp1-beta. There are two alternative pathways for processing. Either nsp4-5 is cleaved, which represents the major pathway or the nsp5-6 and nsp6-7 are processed, which represents the minor pathway. The major pathway occurs when nsp2 acts as a cofactor for nsp4.

The protein localises to the host nucleus. It localises to the host cytoplasm. It is found in the host membrane. The protein resides in the host endoplasmic reticulum. Its subcellular location is the host perinuclear region. It catalyses the reaction RNA(n) + a ribonucleoside 5'-triphosphate = RNA(n+1) + diphosphate. The catalysed reaction is ATP + H2O = ADP + phosphate + H(+). The enzyme catalyses Thiol-dependent hydrolysis of ester, thioester, amide, peptide and isopeptide bonds formed by the C-terminal Gly of ubiquitin (a 76-residue protein attached to proteins as an intracellular targeting signal).. It carries out the reaction uridylyl-uridylyl-ribonucleotide-RNA = a 3'-end uridylyl-2',3'-cyclophospho-uridine-RNA + a 5'-end dephospho-ribonucleoside-RNA. Its function is as follows. Contains the activities necessary for the transcription of negative stranded RNA, leader RNA, subgenomic mRNAs and progeny virion RNA as well as proteinases responsible for the cleavage of the polyprotein into functional products. Inhibits host IFN-beta production. Plays a role in the degradation of the host transcriptional activator CREBBP protein. The degradation of host CREBBP which is a key component of the IFN enhanceosome is likely responsible for the inhibition of interferon mediated by Nsp1-alpha. Also participates in the inhibition of host NF-kappa-B activation by counteracting LUBAC-dependent induction of NF-kappa-B. Reduces host NEMO ubiquitination by blocking the interaction between the two LUBAC complex components RNF31 and SHARPIN. In terms of biological role, plays a role in blocking host mRNA nuclear export to the cytoplasm and subversion of host protein synthesis. Additionally, inhibits the interferon-activated JAK/STAT signal transduction by mediating the ubiquitination and subsequent proteasomal degradation of host KPNA1. Repurposes the host antiviral stress granules into a proviral platform to counteract the EIF2AK2/PKR restriction, thereby regulating the host inflammatory response. Functionally, multifunctional protein that acts as a viral protease and as a viral antagonist of host immune response. Cleaves the nsp2/nsp3 site in the viral polyprotein. Displays deubiquitinating activity that cleaves both ubiquitinated and ISGylated products and therefore inhibits ubiquitin and ISG15-dependent host innate immunity. Also deubiquinates host NFKBIA, thereby interfering with NFKBIA degradation and impairing subsequent NF-kappa-B activation. Its function is as follows. Plays a role in the inhibition of the immune response by interacting with host IFITM1. This interaction leads to the proteasomal degradation of the IFN-induced antiviral protein IFITM1. Cleaves the majority of cleavage sites present in the C-terminus of the polyprotein. Triggers host apoptosis through caspase-3, -8, and -9 activations. Subverts host innate immune responses through its protease activity. Targets the NF-kappa-B essential modulator NEMO and mediates its cleavage. Blocks host interferon beta induction and downstream signaling by cleaving mitochondrial MAVS, dislodging it from the mitochondria. Impairs host defense by cleaving host mRNA-decapping enzyme DCP1A to attenuate its antiviral activity. In terms of biological role, plays a role in the initial induction of autophagosomes from host endoplasmic reticulum. Functionally, plays a role in the inhibition of host STAT3 signaling pathway by inducing the degradation of STAT3. Its function is as follows. Responsible for replication and transcription of the viral RNA genome. Displays RNA and DNA duplex-unwinding activities with 5' to 3' polarity. In terms of biological role, plays a role in viral transcription/replication and prevents the simultaneous activation of host cell dsRNA sensors, such as MDA5/IFIH1, OAS, PKR and NLRP3 inflammasome. Acts by degrading the 5'-polyuridines generated during replication of the poly(A) region of viral genomic and subgenomic RNAs. Catalyzes a two-step reaction in which a 2'3'-cyclic phosphate (2'3'-cP) is first generated by 2'-O transesterification, which is then hydrolyzed to a 3'-phosphate (3'-P). If not degraded, poly(U) RNA would hybridize with poly(A) RNA tails and activate host dsRNA sensors. Also plays a role in the inhibition of host type I interferon production by recruiting host OTULIN to promote removal of linear ubiquitination targeting host NEMO. The sequence is that of Replicase polyprotein 1ab (rep) from Sus scrofa (Pig).